The sequence spans 98 residues: Large ribosomal subunit protein eL30 (98 aa).

The protein belongs to the eukaryotic ribosomal protein eL30 family.

In Methanosphaera stadtmanae (strain ATCC 43021 / DSM 3091 / JCM 11832 / MCB-3), this protein is Large ribosomal subunit protein eL30.